A 191-amino-acid polypeptide reads, in one-letter code: Peptidyl-tRNA hydrolase (191 aa).

Residue Tyr17 coordinates tRNA. His22 acts as the Proton acceptor in catalysis. TRNA-binding residues include Tyr68, Asn70, and Asn116.

Belongs to the PTH family. In terms of assembly, monomer.

The protein localises to the cytoplasm. The enzyme catalyses an N-acyl-L-alpha-aminoacyl-tRNA + H2O = an N-acyl-L-amino acid + a tRNA + H(+). Hydrolyzes ribosome-free peptidyl-tRNAs (with 1 or more amino acids incorporated), which drop off the ribosome during protein synthesis, or as a result of ribosome stalling. In terms of biological role, catalyzes the release of premature peptidyl moieties from peptidyl-tRNA molecules trapped in stalled 50S ribosomal subunits, and thus maintains levels of free tRNAs and 50S ribosomes. This Francisella tularensis subsp. tularensis (strain FSC 198) protein is Peptidyl-tRNA hydrolase.